Consider the following 986-residue polypeptide: Probable serine/threonine-protein kinase DDB_G0272092 (986 aa).

Positions methionine 1–tyrosine 107 constitute a C2 domain. Ca(2+) is bound by residues aspartate 22, aspartate 28, aspartate 76, aspartate 78, serine 81, and aspartate 84. ANK repeat units follow at residues proline 137–isoleucine 167, glutamate 171–isoleucine 201, histidine 205–aspartate 238, leucine 242–histidine 274, threonine 278–isoleucine 307, and proline 312–glutamate 344. One can recognise an SAM domain in the interval glutamate 333–proline 396. Positions histidine 412 to asparagine 438 are enriched in low complexity. 2 disordered regions span residues histidine 412–threonine 520 and threonine 532–proline 574. Polar residues predominate over residues aspartate 439 to serine 448. The segment covering glutamine 454–asparagine 464 has biased composition (low complexity). Residues valine 465–leucine 476 show a composition bias toward polar residues. 2 stretches are compositionally biased toward low complexity: residues asparagine 493–threonine 520 and threonine 546–proline 571. The region spanning leucine 601–asparagine 870 is the Protein kinase domain. Residues leucine 607 to valine 615 and lysine 628 each bind ATP. The Proton acceptor role is filled by aspartate 722. Composition is skewed to low complexity over residues aspartate 901–asparagine 913 and serine 928–asparagine 947. Residues aspartate 901–lysine 986 are disordered. Polar residues-rich tracts occupy residues isoleucine 948–lysine 959 and leucine 969–proline 978.

It belongs to the protein kinase superfamily. TKL Ser/Thr protein kinase family. Requires Ca(2+) as cofactor.

It carries out the reaction L-seryl-[protein] + ATP = O-phospho-L-seryl-[protein] + ADP + H(+). The enzyme catalyses L-threonyl-[protein] + ATP = O-phospho-L-threonyl-[protein] + ADP + H(+). In Dictyostelium discoideum (Social amoeba), this protein is Probable serine/threonine-protein kinase DDB_G0272092.